Reading from the N-terminus, the 123-residue chain is Protein LLP homolog (123 aa).

Residues 1-21 (MAKSIRSKWKRKMRAEKRKKN) are compositionally biased toward basic residues. Disordered regions lie at residues 1–23 (MAKS…KNAP) and 55–123 (KINE…KLAW). Positions 70-89 (DSSKMDMELKRNKKNLRDQH) are enriched in basic and acidic residues. Residues 100 to 123 (QQKKLKSQCGKKKGKSKQAKKLAW) show a composition bias toward basic residues.

It belongs to the learning-associated protein family.

Its subcellular location is the nucleus. It localises to the nucleolus. The protein localises to the chromosome. Functionally, regulates dendritic and spine growth and synaptic transmission. The chain is Protein LLP homolog (llph) from Xenopus tropicalis (Western clawed frog).